Reading from the N-terminus, the 180-residue chain is Large ribosomal subunit protein uL5 (180 aa).

This sequence belongs to the universal ribosomal protein uL5 family. In terms of assembly, part of the 50S ribosomal subunit; part of the 5S rRNA/L5/L18/L25 subcomplex. Contacts the 5S rRNA and the P site tRNA. Forms a bridge to the 30S subunit in the 70S ribosome.

Functionally, this is one of the proteins that bind and probably mediate the attachment of the 5S RNA into the large ribosomal subunit, where it forms part of the central protuberance. In the 70S ribosome it contacts protein S13 of the 30S subunit (bridge B1b), connecting the 2 subunits; this bridge is implicated in subunit movement. Contacts the P site tRNA; the 5S rRNA and some of its associated proteins might help stabilize positioning of ribosome-bound tRNAs. This is Large ribosomal subunit protein uL5 from Ralstonia nicotianae (strain ATCC BAA-1114 / GMI1000) (Ralstonia solanacearum).